The primary structure comprises 272 residues: Dermonecrotic toxin LvSicTox-alphaIC1biv (272 aa).

The active site involves H5. Mg(2+) contacts are provided by E25 and D27. The Nucleophile role is filled by H41. Cystine bridges form between C45–C51 and C47–C189. D84 is a Mg(2+) binding site.

Belongs to the arthropod phospholipase D family. Class II subfamily. It depends on Mg(2+) as a cofactor. Expressed by the venom gland.

The protein resides in the secreted. The catalysed reaction is an N-(acyl)-sphingosylphosphocholine = an N-(acyl)-sphingosyl-1,3-cyclic phosphate + choline. The enzyme catalyses an N-(acyl)-sphingosylphosphoethanolamine = an N-(acyl)-sphingosyl-1,3-cyclic phosphate + ethanolamine. It catalyses the reaction a 1-acyl-sn-glycero-3-phosphocholine = a 1-acyl-sn-glycero-2,3-cyclic phosphate + choline. It carries out the reaction a 1-acyl-sn-glycero-3-phosphoethanolamine = a 1-acyl-sn-glycero-2,3-cyclic phosphate + ethanolamine. In terms of biological role, dermonecrotic toxins cleave the phosphodiester linkage between the phosphate and headgroup of certain phospholipids (sphingolipid and lysolipid substrates), forming an alcohol (often choline) and a cyclic phosphate. This toxin acts on sphingomyelin (SM). It may also act on ceramide phosphoethanolamine (CPE), lysophosphatidylcholine (LPC) and lysophosphatidylethanolamine (LPE), but not on lysophosphatidylserine (LPS), and lysophosphatidylglycerol (LPG). It acts by transphosphatidylation, releasing exclusively cyclic phosphate products as second products. Induces dermonecrosis, hemolysis, increased vascular permeability, edema, inflammatory response, and platelet aggregation. This Loxosceles variegata (Recluse spider) protein is Dermonecrotic toxin LvSicTox-alphaIC1biv.